Reading from the N-terminus, the 241-residue chain is Fatty acid metabolism regulator protein (241 aa).

Positions 11 to 79 (QSPAGLAEEY…HGKPTKVNNI (69 aa)) constitute an HTH gntR-type domain. The H-T-H motif DNA-binding region spans 39–58 (ERELAEKIGVTRTTLREVLQ).

Homodimer.

The protein localises to the cytoplasm. Multifunctional regulator of fatty acid metabolism. The polypeptide is Fatty acid metabolism regulator protein (Pasteurella multocida (strain Pm70)).